The primary structure comprises 406 residues: Na(+)/H(+) antiporter NhaA (406 aa).

12 helical membrane-spanning segments follow: residues 29–49 (FAGI…NNIF), 75–95 (FIEL…GLEM), 111–131 (ILPA…YMFF), 141–161 (GWAI…SFFS), 170–190 (AFII…LALF), 195–215 (INTP…ILNY), 220–240 (QLFY…ESGI), 242–262 (GTLC…GEFN), 278–298 (YFIL…YFAF), 306–326 (ILAL…LGIM), 349–369 (FYSI…IGSI), and 382–402 (AAVI…LKYC).

Belongs to the NhaA Na(+)/H(+) (TC 2.A.33) antiporter family.

It is found in the cell inner membrane. The enzyme catalyses Na(+)(in) + 2 H(+)(out) = Na(+)(out) + 2 H(+)(in). Na(+)/H(+) antiporter that extrudes sodium in exchange for external protons. The sequence is that of Na(+)/H(+) antiporter NhaA from Rickettsia massiliae (strain Mtu5).